A 197-amino-acid polypeptide reads, in one-letter code: Nucleoside triphosphate pyrophosphatase (197 aa).

Asp-72 (proton acceptor) is an active-site residue.

This sequence belongs to the Maf family. The cofactor is a divalent metal cation.

The protein localises to the cytoplasm. The enzyme catalyses a ribonucleoside 5'-triphosphate + H2O = a ribonucleoside 5'-phosphate + diphosphate + H(+). It carries out the reaction a 2'-deoxyribonucleoside 5'-triphosphate + H2O = a 2'-deoxyribonucleoside 5'-phosphate + diphosphate + H(+). Its function is as follows. Nucleoside triphosphate pyrophosphatase. May have a dual role in cell division arrest and in preventing the incorporation of modified nucleotides into cellular nucleic acids. This chain is Nucleoside triphosphate pyrophosphatase, found in Corynebacterium glutamicum (strain ATCC 13032 / DSM 20300 / JCM 1318 / BCRC 11384 / CCUG 27702 / LMG 3730 / NBRC 12168 / NCIMB 10025 / NRRL B-2784 / 534).